Here is a 108-residue protein sequence, read N- to C-terminus: VQ motif-containing protein 10 (108 aa).

The VQ signature appears at 29–38; sequence FKTVVQELTG. The segment at 65–85 is disordered; it reads IGEDTRQLHGGGGGGGRMGTT. The span at 73-82 shows a compositional bias: gly residues; it reads HGGGGGGGRM.

In terms of assembly, interacts with WRKY25, WRKY26 and WRKY33.

It localises to the nucleus. May modulate WRKY transcription factor activities. This Arabidopsis thaliana (Mouse-ear cress) protein is VQ motif-containing protein 10.